We begin with the raw amino-acid sequence, 125 residues long: Prefoldin subunit beta (125 aa).

It belongs to the prefoldin subunit beta family. In terms of assembly, heterohexamer of two alpha and four beta subunits.

It is found in the cytoplasm. Functionally, molecular chaperone capable of stabilizing a range of proteins. Seems to fulfill an ATP-independent, HSP70-like function in archaeal de novo protein folding. The protein is Prefoldin subunit beta of Sulfolobus acidocaldarius (strain ATCC 33909 / DSM 639 / JCM 8929 / NBRC 15157 / NCIMB 11770).